Here is a 298-residue protein sequence, read N- to C-terminus: Apolipoprotein E (298 aa).

Residues 1 to 18 form the signal peptide; sequence MKVLWAALVVTLLAGCRA. Repeat copies occupy residues 74–95, 96–117, 118–139, 140–161, 162–183, 184–204, 205–222, and 223–244. The 8 X 22 AA approximate tandem repeats stretch occupies residues 74 to 244; that stretch reads LLIEDTMKEV…RLEEVREQME (171 aa). Residue methionine 137 is modified to Methionine sulfoxide. Serine 141 carries the post-translational modification Phosphoserine. An LDL and other lipoprotein receptors binding region spans residues 152–162; that stretch reads HPRKMKRRLQR. 156–159 provides a ligand contact to heparin; that stretch reads MKRR. 218-225 is a heparin binding site; it reads GEQMRGRL. A specificity for association with VLDL region spans residues 260–272; the sequence is RLKSWFEPMMEDM.

This sequence belongs to the apolipoprotein A1/A4/E family. In terms of assembly, homotetramer. May interact with ABCA1; functionally associated with ABCA1 in the biogenesis of HDLs. May interact with APP/A4 amyloid-beta peptide; the interaction is extremely stable in vitro but its physiological significance is unclear. May interact with MAPT. May interact with MAP2. In the cerebrospinal fluid, interacts with secreted SORL1. Interacts with PMEL; this allows the loading of PMEL luminal fragment on ILVs to induce fibril nucleation. Post-translationally, APOE exists as multiple glycosylated and sialylated glycoforms within cells and in plasma. The extent of glycosylation and sialylation are tissue and context specific. Glycated in plasma VLDL. In terms of processing, phosphorylated by FAM20C in the extracellular medium.

The protein localises to the secreted. It localises to the extracellular space. Its subcellular location is the extracellular matrix. It is found in the extracellular vesicle. The protein resides in the endosome. The protein localises to the multivesicular body. Its function is as follows. APOE is an apolipoprotein, a protein associating with lipid particles, that mainly functions in lipoprotein-mediated lipid transport between organs via the plasma and interstitial fluids. APOE is a core component of plasma lipoproteins and is involved in their production, conversion and clearance. Apolipoproteins are amphipathic molecules that interact both with lipids of the lipoprotein particle core and the aqueous environment of the plasma. As such, APOE associates with chylomicrons, chylomicron remnants, very low density lipoproteins (VLDL) and intermediate density lipoproteins (IDL) but shows a preferential binding to high-density lipoproteins (HDL). It also binds a wide range of cellular receptors including the LDL receptor/LDLR and the very low-density lipoprotein receptor/VLDLR that mediate the cellular uptake of the APOE-containing lipoprotein particles. Finally, APOE also has a heparin-binding activity and binds heparan-sulfate proteoglycans on the surface of cells, a property that supports the capture and the receptor-mediated uptake of APOE-containing lipoproteins by cells. The chain is Apolipoprotein E (APOE) from Cavia porcellus (Guinea pig).